Consider the following 274-residue polypeptide: Bis(5'-nucleosyl)-tetraphosphatase, symmetrical (274 aa).

It belongs to the Ap4A hydrolase family.

The catalysed reaction is P(1),P(4)-bis(5'-adenosyl) tetraphosphate + H2O = 2 ADP + 2 H(+). Functionally, hydrolyzes diadenosine 5',5'''-P1,P4-tetraphosphate to yield ADP. This is Bis(5'-nucleosyl)-tetraphosphatase, symmetrical from Shewanella baltica (strain OS185).